An 862-amino-acid polypeptide reads, in one-letter code: MSQLHTNSKEVHASSSNSQDDKLQKRRARLAAWNQKKASSEKSENNEDKKPKIESSKLQEWIKRRQQKSATPEVPSTEASQKPTSIKPILRARLSTSSSKQTQLVPKKRSIFDDDDEQDDAKTAKKDFRIPNEKKLPASTEEQESEDEEKVLERIRQAESGTSFLVESGFEQDLGADSGISGSEGDEEDDEEGQQRLLSEKLQKLTNKEKKLMALDYTQMEYTSVRKKFYTPPEELKDVPPEKVTALRTAMDGIKVRGSDCPMPIQKWAQLGLPSSIMTVLEEKLGYDTPSPIQSQALPAIMSGRDIIGVANTGSGKTLAFVIPLIRHIMDQPPLKSGDGPIGVILTPTRELALQIQKELVNFTQAVELSVCCCYGGSPIESQIADLKRGTEIIVGTPGRVIDLLAANGGRVTNLRRTTFLVLDEADRMFDMGFEPQVNKVLSQIRPDKQMVLFSATFPKKLESLARSFLVDPIEIVAGGISVVAPEITQRVVLIDDSGDISQKKLQALLKIVDEFSVEDPEGKILIFVDKQEAADDLMVRLLNNQISCIVIHGGKDQVDRKHAIKQFSDKNGLRVLIATSIAARGLDVRGLNLVINYDAPSHMEDYVHRVGRTGRAGATGTAVTLVLSSQEREIRDLVRAMKMSGKVDDIPAELQSIADKFLKKVKSGEEKFNSGFGGKGLENLQERRDNVREIEMQMYGDKVKETNGVSNSSAGRKALGTPEAAEIAGIKLPDFDIVEGRAPETSGPDRCKFHSRIEINDLPQKARWVVVNRDSLSKIIDATSTSITSKGQYYPPNSKLPKPTIKYGREIPPPPKLYLLVEGLTKSAVQEANKLLRQKMIEGVDVATEEDAKAPIGRYNV.

The disordered stretch occupies residues 1-195 (MSQLHTNSKE…DEEDDEEGQQ (195 aa)). Residues 38–63 (ASSEKSENNEDKKPKIESSKLQEWIK) show a composition bias toward basic and acidic residues. Residues 94 to 104 (LSTSSSKQTQL) show a composition bias toward polar residues. Residues 120 to 136 (DAKTAKKDFRIPNEKKL) show a composition bias toward basic and acidic residues. The span at 141–150 (EEQESEDEEK) shows a compositional bias: acidic residues. The Q motif signature appears at 266–295 (QKWAQLGLPSSIMTVLEEKLGYDTPSPIQS). In terms of domain architecture, Helicase ATP-binding spans 298–476 (LPAIMSGRDI…RSFLVDPIEI (179 aa)). 311-318 (ANTGSGKT) serves as a coordination point for ATP. Positions 424–427 (DEAD) match the DEAD box motif. Residues 505–659 (KLQALLKIVD…DIPAELQSIA (155 aa)) enclose the Helicase C-terminal domain.

It belongs to the DEAD box helicase family. DDX46/PRP5 subfamily.

It localises to the nucleus. It carries out the reaction ATP + H2O = ADP + phosphate + H(+). In terms of biological role, ATP-dependent RNA helicase involved spliceosome assembly and in nuclear splicing. Catalyzes an ATP-dependent conformational change of U2 snRNP. Bridges U1 and U2 snRNPs and enables stable U2 snRNP association with intron RNA. The sequence is that of Pre-mRNA-processing ATP-dependent RNA helicase PRP5 (PRP5) from Meyerozyma guilliermondii (strain ATCC 6260 / CBS 566 / DSM 6381 / JCM 1539 / NBRC 10279 / NRRL Y-324) (Yeast).